A 924-amino-acid polypeptide reads, in one-letter code: Nodulation receptor kinase (924 aa).

The first 29 residues, 1 to 29, serve as a signal peptide directing secretion; the sequence is MMELRVICIIRLVVACVLCLCIFIRSASS. A coiled-coil region spans residues 361-382; the sequence is EVIQKMRKELLLQNQDNEALES. LRR repeat units lie at residues 406–428, 430–452, 453–475, and 477–498; these read VITK…VTEM, KLQI…PPSS, LLIS…IISL, and HLNS…AKLN. The chain crosses the membrane as a helical span at residues 520-540; it reads FMIGAITSGSILITLAVVILF. In terms of domain architecture, Protein kinase spans 595–872; the sequence is EKYKTLIGEG…IVRELEDALI (278 aa). ATP contacts are provided by residues 601–609 and lysine 623; that span reads IGEGGFGSV. Aspartate 721 acts as the Proton acceptor in catalysis.

The protein belongs to the protein kinase superfamily. Ser/Thr protein kinase family. Post-translationally, may be phosphorylated.

The protein resides in the membrane. It carries out the reaction L-seryl-[protein] + ATP = O-phospho-L-seryl-[protein] + ADP + H(+). The catalysed reaction is L-threonyl-[protein] + ATP = O-phospho-L-threonyl-[protein] + ADP + H(+). Its function is as follows. Involved in the perception of symbiotic fungi and bacteria and required for the calcium spiking. Part of the perception/transduction system leading to nodulation or mycorrhizal infection. In Pisum sativum (Garden pea), this protein is Nodulation receptor kinase (NORK).